The primary structure comprises 554 residues: 2-succinyl-5-enolpyruvyl-6-hydroxy-3-cyclohexene-1-carboxylate synthase (554 aa).

This sequence belongs to the TPP enzyme family. MenD subfamily. As to quaternary structure, homodimer. Mg(2+) is required as a cofactor. The cofactor is Mn(2+). Thiamine diphosphate serves as cofactor.

The catalysed reaction is isochorismate + 2-oxoglutarate + H(+) = 5-enolpyruvoyl-6-hydroxy-2-succinyl-cyclohex-3-ene-1-carboxylate + CO2. Its pathway is quinol/quinone metabolism; 1,4-dihydroxy-2-naphthoate biosynthesis; 1,4-dihydroxy-2-naphthoate from chorismate: step 2/7. The protein operates within quinol/quinone metabolism; menaquinone biosynthesis. Its function is as follows. Catalyzes the thiamine diphosphate-dependent decarboxylation of 2-oxoglutarate and the subsequent addition of the resulting succinic semialdehyde-thiamine pyrophosphate anion to isochorismate to yield 2-succinyl-5-enolpyruvyl-6-hydroxy-3-cyclohexene-1-carboxylate (SEPHCHC). The polypeptide is 2-succinyl-5-enolpyruvyl-6-hydroxy-3-cyclohexene-1-carboxylate synthase (Lactococcus lactis subsp. cremoris (strain SK11)).